The sequence spans 199 residues: dTTP/UTP pyrophosphatase (199 aa).

The active-site Proton acceptor is D73.

It belongs to the Maf family. YhdE subfamily. Requires a divalent metal cation as cofactor.

The protein resides in the cytoplasm. It catalyses the reaction dTTP + H2O = dTMP + diphosphate + H(+). The catalysed reaction is UTP + H2O = UMP + diphosphate + H(+). Nucleoside triphosphate pyrophosphatase that hydrolyzes dTTP and UTP. May have a dual role in cell division arrest and in preventing the incorporation of modified nucleotides into cellular nucleic acids. This chain is dTTP/UTP pyrophosphatase, found in Caldicellulosiruptor bescii (strain ATCC BAA-1888 / DSM 6725 / KCTC 15123 / Z-1320) (Anaerocellum thermophilum).